The following is a 935-amino-acid chain: Coiled-coil domain-containing protein 66 (935 aa).

Over residues 76–96 the composition is skewed to polar residues; that stretch reads LDTSQAKPENSRLTFSPSTDK. Positions 76–103 are disordered; it reads LDTSQAKPENSRLTFSPSTDKQYSEKDS. Phosphothreonine is present on Thr-114. Ser-366 is subject to Phosphoserine. Positions 462 to 555 form a coiled coil; the sequence is LEHQKAIMAQ…EQRIRELAQK (94 aa). 3 disordered regions span residues 470–491, 577–602, and 738–794; these read AQVE…KEEQ, TISS…DTGV, and ENLS…RTQQ. A compositionally biased stretch (basic and acidic residues) spans 473-491; sequence EENRRKKRLEEEQRKKEEQ. Residues 567 to 935 are mediates localization to cilia, centrosomes and spindle microtubules and the interaction with PCM1, CEP290, CEP104 and CSPP1; the sequence is GAQVDYKAFT…NQEDNFSSSF (369 aa). The segment covering 590–602 has biased composition (polar residues); it reads DTSTASPKKDTGV. Ser-595 carries the phosphoserine modification. The span at 752-782 shows a compositional bias: basic and acidic residues; sequence SHRETESESRLHLIKKVEEPLKTPSVSKERF. Residues 783-794 are compositionally biased toward polar residues; that stretch reads QTSPAVKNRTQQ.

Homodimer; disulfide-linked. Interacts with CEP290. Interacts with PCM1. Interacts with ARMC9, TOGARAM1, CSPP1 and CEP104. Interacts with CDK5RAP2, CEP152, CEP192, TBG1 and PRC1. As to expression, widely expressed. Expressed in retina by rod photoreceptors but also detected in outer plexiform and ganglion cell layers (at protein level).

The protein resides in the cytoplasm. Its subcellular location is the cytoskeleton. It localises to the microtubule organizing center. The protein localises to the centrosome. It is found in the centriolar satellite. The protein resides in the cell projection. Its subcellular location is the cilium. It localises to the cilium basal body. The protein localises to the cilium axoneme. It is found in the photoreceptor inner segment. The protein resides in the photoreceptor outer segment. Its function is as follows. Microtubule-binding protein required for ciliogenesis. May function in ciliogenesis by mediating the transport of proteins like BBS4 to the cilium, but also through the organization of the centriolar satellites. Required for the assembly of signaling-competent cilia with proper structure and length. Mediates this function in part by regulating transition zone assembly and basal body recruitment of the IFT-B complex. Cooperates with the ciliopathy proteins CSPP1 and CEP104 during cilium length regulation. Plays two important roles during cell division. First, is required for mitotic progression via regulation of spindle assembly, organization and orientation, levels of spindle microtubules (MTs), kinetochore-fiber integrity, and chromosome alignment. Second, functions during cytokinesis in part by regulating assembly and organization of central spindle and midbody MTs. Plays a role in retina morphogenesis and/or homeostasis. The sequence is that of Coiled-coil domain-containing protein 66 from Mus musculus (Mouse).